The sequence spans 294 residues: MELSQLLNEIRANYEQLLTRNQIETVLSTRIQLEEDITKKMDKDGEALKAAQAELKEARRQCHHLQVEIESLHAVERGLENSLQASEQHYQMQLQDLESVIGRLERELQEVRRGIERQLREHEMLLNTKMRLEQEIATYRRLLEQEEIRYYGCIQGEKKEEKPTKSKVGFLLPSAIINEISFSTKVSQKYENENMETVTKQAVVNRDVKESAEAHGTIQTEKVDEVIKEWEGSFFKDNPRLRKKSVSLRFDLHLAATDEGCLESRQDNLPDIEVRLIMRRSCSIPSIKPPPGTN.

The IF rod domain occupies 1-150; it reads MELSQLLNEI…RLLEQEEIRY (150 aa). Residues 1–151 are a coiled coil; it reads MELSQLLNEI…LLEQEEIRYY (151 aa).

It belongs to the intermediate filament family.

The sequence is that of Keratin-like protein KRT222 (Krt222) from Mus musculus (Mouse).